Here is an 87-residue protein sequence, read N- to C-terminus: Small ribosomal subunit protein bS20 (87 aa).

The tract at residues 1 to 26 (MANTAQAKKRVRQNIKQRERNSGLRS) is disordered.

The protein belongs to the bacterial ribosomal protein bS20 family.

Functionally, binds directly to 16S ribosomal RNA. This chain is Small ribosomal subunit protein bS20, found in Nitrosomonas eutropha (strain DSM 101675 / C91 / Nm57).